A 91-amino-acid polypeptide reads, in one-letter code: Apolipoprotein C-III (91 aa).

The first 20 residues, 1 to 20 (MQPRVLLAVTLLALLVSARA), serve as a signal peptide directing secretion. Position 63 is a methionine sulfoxide (M63). Residues 68 to 91 (DSMKGYWTSLIGRLSGFLDSTPSS) form a lipid-binding region.

Belongs to the apolipoprotein C3 family.

It is found in the secreted. Its function is as follows. Component of triglyceride-rich very low density lipoproteins (VLDL) and high density lipoproteins (HDL) in plasma. Plays a multifaceted role in triglyceride homeostasis. Intracellularly, promotes hepatic very low density lipoprotein 1 (VLDL1) assembly and secretion; extracellularly, attenuates hydrolysis and clearance of triglyceride-rich lipoproteins (TRLs). Impairs the lipolysis of TRLs by inhibiting lipoprotein lipase and the hepatic uptake of TRLs by remnant receptors. Formed of several curved helices connected via semiflexible hinges, so that it can wrap tightly around the curved micelle surface and easily adapt to the different diameters of its natural binding partners. The chain is Apolipoprotein C-III (APOC3) from Cavia porcellus (Guinea pig).